Consider the following 125-residue polypeptide: MAVCIIDHDNIRGVIYVEQVHGKDKVLGSVIGLKSGTYSLIIHRYGDISRGCDSIGSPEIFIGNIFVNRYGVAYVYLDTDVNISTIIGKALSISKNDQRLACGVIGISYINEKIIHFLTINENGV.

A disulfide bond links Cys-52 and Cys-102.

This sequence belongs to the Cu-Zn superoxide dismutase family.

The protein resides in the virion. It localises to the host cytoplasm. Its function is as follows. Superoxide dismutase-like protein with no enzymatic activity. The chain is Cu-Zn superoxide dismutase-like protein OPG175 (OPG175) from Monkeypox virus.